Consider the following 481-residue polypeptide: UDP-glycosyltransferase 85A2 (481 aa).

UDP-alpha-D-glucose-binding positions include Ser303, 360–362, 377–385, and 399–402; these read CPQ, HCGWNSTLE, and FAEQ.

The protein belongs to the UDP-glycosyltransferase family. As to expression, expressed in roots, shoots, leaves and flowers.

The sequence is that of UDP-glycosyltransferase 85A2 (UGT85A2) from Arabidopsis thaliana (Mouse-ear cress).